Here is a 487-residue protein sequence, read N- to C-terminus: Adenylosuccinate synthetase, chloroplastic (487 aa).

A chloroplast-targeting transit peptide spans 1 to 46; that stretch reads MSLSTVNHAAAAAAAAGSGKSFSAAAPAAPSVRLPRTRAPAAAAVS. GTP is bound by residues 74–80 and 102–104; these read GDEGKGK and GHT. Residue Asp75 is the Proton acceptor of the active site. Residues Asp75 and Gly102 each coordinate Mg(2+). IMP contacts are provided by residues 75–78, 100–103, Thr192, Arg206, Gln286, Thr301, and Arg365; these read DEGK and NAGH. The active-site Proton donor is the His103. 361–367 is a binding site for substrate; the sequence is TTTGRPR. Residues Arg367, 393-395, and 476-478 each bind GTP; these read KLD and GVG.

The protein belongs to the adenylosuccinate synthetase family. Homodimer. It depends on Mg(2+) as a cofactor.

The protein resides in the plastid. The protein localises to the chloroplast. The catalysed reaction is IMP + L-aspartate + GTP = N(6)-(1,2-dicarboxyethyl)-AMP + GDP + phosphate + 2 H(+). It participates in purine metabolism; AMP biosynthesis via de novo pathway; AMP from IMP: step 1/2. Its function is as follows. Plays an important role in the de novo pathway and in the salvage pathway of purine nucleotide biosynthesis. Catalyzes the first committed step in the biosynthesis of AMP from IMP. The chain is Adenylosuccinate synthetase, chloroplastic from Oryza sativa subsp. indica (Rice).